Consider the following 155-residue polypeptide: Small ribosomal subunit protein uS7c (155 aa).

Belongs to the universal ribosomal protein uS7 family. Part of the 30S ribosomal subunit.

Its subcellular location is the plastid. The protein localises to the chloroplast. One of the primary rRNA binding proteins, it binds directly to 16S rRNA where it nucleates assembly of the head domain of the 30S subunit. In Cedrus deodara (Deodar cedar), this protein is Small ribosomal subunit protein uS7c (rps7).